The following is a 478-amino-acid chain: Endoglucanase 18 (478 aa).

Residues 1–21 (MGKLLVVMLIGMFLAFESLEA) form the signal peptide. An N-linked (GlcNAc...) asparagine glycan is attached at Asn-29. The Nucleophile role is filled by Asp-76. The active site involves His-398. Residues 433-452 (HTGAIVGGPNSSDQYSDKRT) form a disordered region. Residue Asn-442 is glycosylated (N-linked (GlcNAc...) asparagine). Residues Asp-449 and Glu-458 contribute to the active site.

This sequence belongs to the glycosyl hydrolase 9 (cellulase E) family.

The protein resides in the secreted. It carries out the reaction Endohydrolysis of (1-&gt;4)-beta-D-glucosidic linkages in cellulose, lichenin and cereal beta-D-glucans.. This chain is Endoglucanase 18, found in Arabidopsis thaliana (Mouse-ear cress).